The chain runs to 245 residues: Lytic switch protein BZLF1 (245 aa).

The interval 1–167 (MMDPNSTSED…RTRKPLQPES (167 aa)) is transactivation. T14 and T159 each carry phosphothreonine. The tract at residues 140 to 167 (QLADIGAPQPAPAAAPARRTRKPLQPES) is disordered. Positions 157 to 194 (RRTRKPLQPESLEECDSELDIKRYKNRVASRKCRAKFK) match the Bipartite nuclear localization signal motif. A phosphoserine mark is found at S167, S173, and S186. The segment at 178–195 (KRYKNRVASRKCRAKFKH) is basic motif. The bZIP domain occupies 178–228 (KRYKNRVASRKCRAKFKHLLQHYREVASAKSSENDRLRLLLKQMCPSLDVD). Residues 196-228 (LLQHYREVASAKSSENDRLRLLLKQMCPSLDVD) form a leucine-zipper region. The segment at 229-245 (SIIPRTPDVLHEDLLNF) is accessory activation domain.

It belongs to the bZIP family. In terms of assembly, homodimer. Interacts (via b-ZIP domain) with the DNA polymerase processivity factor BMRF1 (via N-terminus); this interaction may inhibit BZLF1-induced transcription of the BMRF1 promoter. Interacts with human UBN1, CRTC2 and RACK1. Interacts (via N-terminus) with human PAX5 (via N-terminus); this interaction inhibits BZLF1-mediated lytic viral reactivation. Interacts (via leucine-zipper domain) with host CEBPA; this interaction induces G1 host cell cycle arrest. Interacts (via C-terminus) with host TP53BP1 (via C-terminus); this interaction is involved in the activation of the viral lytic cycle. Interacts with host chromatin-remodeling ATPase INO80; this interaction participates to the activation of early lytic viral genes by BZLF1. Interacts with host regulator of chromatin SMARCA5/hSNF2H; this interaction participates to the activation of early lytic viral genes by BZLF1. Interacts with host PLSCR1/Phospholipid scramblase 1; this interaction negatively regulates the transcriptional regulatory activity of BZLF1 by preventing the formation of the BZLF1-CBP complex.

It localises to the host nucleus. In terms of biological role, transcription factor that acts as a molecular switch to induce the transition from the latent to the lytic or productive phase of the virus cycle. Mediates the switch from the latent to the lytic cycle of infection in cells containing a highly methylated viral genome. Probably binds to silenced chromatin and recruits host chromatin-remodeling enzymes. Regulates this switch by binding to 2 types of ZEBRA response elements (ZREs): the CpG-free AP-1 like elements (latency) and the methylated CpG-containing elements (lytic replication). Activates preferentially the methylated forms of the viral lytic R (BRLF1) and Na (BRRF1) gene promoters, the latters being the first genes activated during Z-mediated reactivation in latently infected cells. BZLF1 and BRLF1 act together to trigger lytic replication. Also binds the lytic origin of replication, oriLyt. Induces G1 cell cycle arrest by stabilizing the host CCAAT/enhancer binding protein CEBPA. This function is important because the lytic cycle preferentially takes place in host cells arrested in G1. The protein is Lytic switch protein BZLF1 of Epstein-Barr virus (strain AG876) (HHV-4).